We begin with the raw amino-acid sequence, 87 residues long: Cytochrome c oxidase assembly factor 3, mitochondrial (87 aa).

A helical membrane pass occupies residues 47 to 69 (NNLLTAGALGVSVLAIYGYSIFS).

The protein belongs to the COA3 family.

The protein resides in the mitochondrion membrane. Functionally, plays a critical role in the biogenesis and activity of cytochrome c oxidase (COX) (complex IV). The sequence is that of Cytochrome c oxidase assembly factor 3, mitochondrial (Ccdc56) from Drosophila melanogaster (Fruit fly).